Reading from the N-terminus, the 467-residue chain is Transcriptional regulator of yeast form adherence 6 (467 aa).

Over residues 43 to 52 (NTSDAGSIPT) the composition is skewed to polar residues. 5 disordered regions span residues 43-83 (NTSD…NIDS), 128-149 (GSSG…NSNN), 245-275 (ESPE…SNSS), 312-365 (NNQL…SGSK), and 390-439 (STLN…DNDR). The bHLH domain maps to 92–173 (ETKQLHSIIE…KSSVEYILYL (82 aa)). Composition is skewed to low complexity over residues 257–275 (VSET…SNSS) and 312–322 (NNQLNNRKNSN). The segment covering 323–338 (PISPQTVCIKSQNPSP) has biased composition (polar residues). The span at 345–365 (SSLSTSIVNSPSSSSSLSGSK) shows a compositional bias: low complexity. Residues 417 to 432 (GSANTETVNSGSASSD) show a composition bias toward polar residues.

It localises to the nucleus. Functionally, transcription factor required for yeast cell adherence to silicone substrate. The protein is Transcriptional regulator of yeast form adherence 6 (TRY6) of Candida albicans (strain SC5314 / ATCC MYA-2876) (Yeast).